The following is a 564-amino-acid chain: Hexose transporter HXT13 (564 aa).

Topologically, residues 1–52 (MSSAQSSIDSDGDVRDADIHVAPPVEKEWSDGFDDNEVINGDNVEPPKRGLI) are cytoplasmic. Residues 53 to 73 (GYLVIYLLCYPISFGGFLPGW) form a helical membrane-spanning segment. Over 74–109 (DSGITAGFINMDNFKMNFGSYKHSTGEYYLSNVRMG) the chain is Extracellular. The chain crosses the membrane as a helical span at residues 110–130 (LLVAMFSIGCAIGGLIFARLA). Residues 131 to 136 (DTLGRR) are Cytoplasmic-facing. A helical membrane pass occupies residues 137-157 (LAIVIVVLVYMVGAIIQISSN). At 158–167 (HKWYQYFVGK) the chain is on the extracellular side. A helical transmembrane segment spans residues 168–188 (IIYGLGAGGCSVLCPMLLSEI). Topologically, residues 189-194 (APTDLR) are cytoplasmic. A helical transmembrane segment spans residues 195 to 215 (GGLVSLYQLNMTFGIFLGYCS). Topologically, residues 216-229 (VYGTRKYDNTAQWR) are extracellular. The chain crosses the membrane as a helical span at residues 230–250 (VPLGLCFLWALIIIIGMLLVP). Over 251–333 (ESPRYLIECE…VQTFLQLTGE (83 aa)) the chain is Cytoplasmic. Residues 334-350 (NYFFFYGTTIFKSVGLT) traverse the membrane as a helical segment. Over 351 to 356 (DGFETS) the chain is Extracellular. Residues 357–374 (IVLGTVNFFSTIIAVMVV) traverse the membrane as a helical segment. Topologically, residues 375-381 (DKIGRRK) are cytoplasmic. A helical membrane pass occupies residues 382–402 (CLLFGAAGMMACMVIFASIGV). Topologically, residues 403-424 (KCLYPHGQDGPSSKGAGNAMIV) are extracellular. Residues 425–445 (FTCFYIFCFATTWAPVAYIVV) form a helical membrane-spanning segment. The Cytoplasmic portion of the chain corresponds to 446-462 (AESFPSKVKSRAMSIST). A helical transmembrane segment spans residues 463-483 (ACNWLWQFLIGFFTPFITGSI). His484 is a topological domain (extracellular). Residues 485-505 (FYYGYVFVGCLVAMFLYVFFF) form a helical membrane-spanning segment. Residues 506–564 (LPETIGLSLEEIQLLYEEGIKPWKSASWVPPSRRGISSEESKTEKKDWKKFLKFSKNSD) lie on the Cytoplasmic side of the membrane. Residues 530-551 (SASWVPPSRRGISSEESKTEKK) are disordered. Residues 541-551 (ISSEESKTEKK) are compositionally biased toward basic and acidic residues.

This sequence belongs to the major facilitator superfamily. Sugar transporter (TC 2.A.1.1) family.

It localises to the membrane. Probable glucose transporter. The sequence is that of Hexose transporter HXT13 (HXT13) from Saccharomyces cerevisiae (strain ATCC 204508 / S288c) (Baker's yeast).